The sequence spans 310 residues: Altered inheritance of mitochondria protein 46, mitochondrial (310 aa).

The N-terminal 20 residues, 1–20, are a transit peptide targeting the mitochondrion; it reads MRLISKVLVKTNCLEVGMRR.

This sequence belongs to the AIM18/AIM46 family.

The protein resides in the mitochondrion. The sequence is that of Altered inheritance of mitochondria protein 46, mitochondrial (AIM46) from Saccharomyces cerevisiae (strain JAY291) (Baker's yeast).